Consider the following 176-residue polypeptide: Large ribosomal subunit protein bL17m (176 aa).

The N-terminal 8 residues, 1–8 (MRLSLAAA), are a transit peptide targeting the mitochondrion.

The protein belongs to the bacterial ribosomal protein bL17 family. In terms of assembly, component of the mitochondrial ribosome large subunit (39S) which comprises a 16S rRNA and about 50 distinct proteins.

The protein localises to the mitochondrion. This Rattus norvegicus (Rat) protein is Large ribosomal subunit protein bL17m (Mrpl17).